The primary structure comprises 535 residues: Major glycerophosphoinositol permease GIT3 (535 aa).

The chain crosses the membrane as a helical span at residues 49 to 69 (VVTSVKANSLWPAFASGAGLF). Asparagine 75 is a glycosylation site (N-linked (GlcNAc...) asparagine). Helical transmembrane passes span 101 to 121 (NIAS…GYIS), 137 to 157 (LIFF…QGFF), 165 to 185 (FFLG…ASEF), 204 to 224 (AMID…IWIF), and 232 to 252 (LWRV…FMRL). The N-linked (GlcNAc...) asparagine glycan is linked to asparagine 256. 6 helical membrane-spanning segments follow: residues 275–295 (WWLI…IWFI), 324–344 (WGWS…GAIS), 352–372 (LTLA…SACL), 378–398 (HIAG…FGPG), 419–439 (GIAA…FPAI), and 455–475 (VPFY…IFFC). Asparagine 532 carries N-linked (GlcNAc...) asparagine glycosylation.

This sequence belongs to the major facilitator superfamily. Sugar transporter (TC 2.A.1.1) family.

Its subcellular location is the cell membrane. The enzyme catalyses sn-glycerol 3-phosphocholine(out) = sn-glycerol 3-phosphocholine(in). Functionally, glycerophosphodiester transporter that mediates uptake of glycerophosphocholine (GroPCho) with GIT4. GIT3 acts as the major GroPCho permease. Does not possess detectable glycerophosphoinositol (GroPIns) transport activity. The expanded ability to utilize GroPIns and GroPCho results from the organism's pathogenic nature and its need to occupy a variety of environments within its host organism. This possibility is buttressed by the fact that GroPIns and GroPCho are present and abundant in human fluids. This is Major glycerophosphoinositol permease GIT3 from Candida albicans (strain SC5314 / ATCC MYA-2876) (Yeast).